The following is a 350-amino-acid chain: Ribosomal RNA large subunit methyltransferase M (350 aa).

S-adenosyl-L-methionine-binding positions include Ser-184, 217–220 (APGG), Asp-236, Asp-256, and Asp-272. The active-site Proton acceptor is Lys-301.

This sequence belongs to the class I-like SAM-binding methyltransferase superfamily. RNA methyltransferase RlmE family. RlmM subfamily. As to quaternary structure, monomer.

The protein localises to the cytoplasm. It carries out the reaction cytidine(2498) in 23S rRNA + S-adenosyl-L-methionine = 2'-O-methylcytidine(2498) in 23S rRNA + S-adenosyl-L-homocysteine + H(+). Catalyzes the 2'-O-methylation at nucleotide C2498 in 23S rRNA. This is Ribosomal RNA large subunit methyltransferase M from Marinomonas sp. (strain MWYL1).